The chain runs to 567 residues: Phenylalanine--tRNA ligase beta subunit (567 aa).

Residues 287–362 (YFQEEVEFNV…IGEGLASFHP (76 aa)) enclose the B5 domain. Mg(2+)-binding residues include D340, D346, E349, and D350.

Belongs to the phenylalanyl-tRNA synthetase beta subunit family. Type 2 subfamily. As to quaternary structure, tetramer of two alpha and two beta subunits. Mg(2+) serves as cofactor.

It localises to the cytoplasm. The catalysed reaction is tRNA(Phe) + L-phenylalanine + ATP = L-phenylalanyl-tRNA(Phe) + AMP + diphosphate + H(+). This is Phenylalanine--tRNA ligase beta subunit from Borreliella afzelii (strain PKo) (Borrelia afzelii).